The chain runs to 392 residues: L-rhamnonate dehydratase (392 aa).

The substrate site is built by H22 and R48. 3 residues coordinate Mg(2+): D214, E240, and E268. Catalysis depends on H318, which acts as the Proton acceptor. E338 provides a ligand contact to substrate.

Belongs to the mandelate racemase/muconate lactonizing enzyme family. RhamD subfamily. Homooctamer; tetramer of dimers. Mg(2+) serves as cofactor.

The enzyme catalyses L-rhamnonate = 2-dehydro-3-deoxy-L-rhamnonate + H2O. Catalyzes the dehydration of L-rhamnonate to 2-keto-3-deoxy-L-rhamnonate (KDR). The chain is L-rhamnonate dehydratase from Burkholderia cenocepacia (strain HI2424).